Here is a 111-residue protein sequence, read N- to C-terminus: ATP-dependent Clp protease adapter protein ClpS (111 aa).

The protein belongs to the ClpS family. As to quaternary structure, binds to the N-terminal domain of the chaperone ClpA.

Functionally, involved in the modulation of the specificity of the ClpAP-mediated ATP-dependent protein degradation. This Leptospira interrogans serogroup Icterohaemorrhagiae serovar copenhageni (strain Fiocruz L1-130) protein is ATP-dependent Clp protease adapter protein ClpS.